Here is a 123-residue protein sequence, read N- to C-terminus: Large ribosomal subunit protein uL22 (123 aa).

The protein belongs to the universal ribosomal protein uL22 family. Part of the 50S ribosomal subunit.

Functionally, this protein binds specifically to 23S rRNA; its binding is stimulated by other ribosomal proteins, e.g. L4, L17, and L20. It is important during the early stages of 50S assembly. It makes multiple contacts with different domains of the 23S rRNA in the assembled 50S subunit and ribosome. Its function is as follows. The globular domain of the protein is located near the polypeptide exit tunnel on the outside of the subunit, while an extended beta-hairpin is found that lines the wall of the exit tunnel in the center of the 70S ribosome. The polypeptide is Large ribosomal subunit protein uL22 (Synechococcus sp. (strain JA-3-3Ab) (Cyanobacteria bacterium Yellowstone A-Prime)).